We begin with the raw amino-acid sequence, 213 residues long: Ras-related protein Rab-4A (213 aa).

Positions 18, 19, 20, 21, 22, 23, 37, 39, and 40 each coordinate GTP. Residue Ser22 participates in Mg(2+) binding. The short motif at 39–44 is the Switch 1 element; it reads HTIGVE. Positions 40 and 63 each coordinate Mg(2+). Residues 65–74 carry the Switch 2 motif; that stretch reads AGQERFRSVT. Gly66, Asn121, Lys122, Asp124, Ala152, and Leu153 together coordinate GTP. Residues Cys211 and Cys213 are each lipidated (S-geranylgeranyl cysteine). Cys213 bears the Cysteine methyl ester mark.

Belongs to the small GTPase superfamily. Rab family. Mg(2+) serves as cofactor.

It localises to the membrane. The protein resides in the cytoplasm. It is found in the early endosome membrane. Its subcellular location is the recycling endosome membrane. It catalyses the reaction GTP + H2O = GDP + phosphate + H(+). With respect to regulation, regulated by guanine nucleotide exchange factors (GEFs) which promote the exchange of bound GDP for free GTP. Regulated by GTPase activating proteins (GAPs) which increase the GTP hydrolysis activity. Inhibited by GDP dissociation inhibitors (GDIs). The small GTPases Rab are key regulators of intracellular membrane trafficking, from the formation of transport vesicles to their fusion with membranes. Rabs cycle between an inactive GDP-bound form and an active GTP-bound form that is able to recruit to membranes different sets of downstream effectors directly responsible for vesicle formation, movement, tethering and fusion. RAB4A is involved in protein transport. Also plays a role in vesicular traffic. Mediates VEGFR2 endosomal trafficking to enhance VEGFR2 signaling. Acts as a regulator of platelet alpha-granule release during activation and aggregation of platelets. The protein is Ras-related protein Rab-4A (rab4a) of Danio rerio (Zebrafish).